Consider the following 101-residue polypeptide: Small ribosomal subunit protein uS14 (101 aa).

It belongs to the universal ribosomal protein uS14 family. In terms of assembly, part of the 30S ribosomal subunit. Contacts proteins S3 and S10.

In terms of biological role, binds 16S rRNA, required for the assembly of 30S particles and may also be responsible for determining the conformation of the 16S rRNA at the A site. The chain is Small ribosomal subunit protein uS14 from Sphingopyxis alaskensis (strain DSM 13593 / LMG 18877 / RB2256) (Sphingomonas alaskensis).